The chain runs to 151 residues: UPF0208 membrane protein YE1335 (151 aa).

2 consecutive transmembrane segments (helical) span residues 46-66 and 69-89; these read FGIR…IALG and LGPA…GLWW.

The protein belongs to the UPF0208 family.

The protein resides in the cell inner membrane. The sequence is that of UPF0208 membrane protein YE1335 from Yersinia enterocolitica serotype O:8 / biotype 1B (strain NCTC 13174 / 8081).